Consider the following 448-residue polypeptide: Chromosomal replication initiator protein DnaA (448 aa).

The segment at 1–73 (MNAQLKQLWT…INAIKLITSK (73 aa)) is domain I, interacts with DnaA modulators. The segment at 73–109 (KKYNIEFSITSEEIFNNQQLKPKSSNDNIVVNDEMTS) is domain II. Positions 110 to 326 (ILNPKYTFDS…GALIRIVAYS (217 aa)) are domain III, AAA+ region. ATP is bound by residues glycine 154, glycine 156, lysine 157, and threonine 158. The segment at 327 to 448 (SLTNREISVD…DDLNKKITNN (122 aa)) is domain IV, binds dsDNA.

The protein belongs to the DnaA family. In terms of assembly, oligomerizes as a right-handed, spiral filament on DNA at oriC.

It localises to the cytoplasm. Plays an essential role in the initiation and regulation of chromosomal replication. ATP-DnaA binds to the origin of replication (oriC) to initiate formation of the DNA replication initiation complex once per cell cycle. Binds the DnaA box (a 9 base pair repeat at the origin) and separates the double-stranded (ds)DNA. Forms a right-handed helical filament on oriC DNA; dsDNA binds to the exterior of the filament while single-stranded (ss)DNA is stabiized in the filament's interior. The ATP-DnaA-oriC complex binds and stabilizes one strand of the AT-rich DNA unwinding element (DUE), permitting loading of DNA polymerase. After initiation quickly degrades to an ADP-DnaA complex that is not apt for DNA replication. Binds acidic phospholipids. The protein is Chromosomal replication initiator protein DnaA of Clostridium novyi (strain NT).